The following is a 474-amino-acid chain: Capsid vertex component 1 (474 aa).

Belongs to the herpesviridae CVC1 protein family. As to quaternary structure, interacts (via C-terminus) with capsid vertex component 2/CVC2.

Its subcellular location is the virion. The protein localises to the host nucleus. Its function is as follows. Capsid vertex-specific component that plays a role during viral DNA encapsidation, assuring correct genome cleavage and presumably stabilizing capsids that contain full-length viral genomes. The chain is Capsid vertex component 1 from Alcelaphine herpesvirus 1 (strain C500) (AlHV-1).